A 602-amino-acid polypeptide reads, in one-letter code: Fructan 1-exohydrolase (602 aa).

Positions 1-19 (MAQAWAFLLLPVLLLSSYA) are cleaved as a signal peptide. Aspartate 81 is an active-site residue. Asparagine 174, asparagine 242, and asparagine 254 each carry an N-linked (GlcNAc...) asparagine glycan. Residues cysteine 452 and cysteine 498 are joined by a disulfide bond.

Belongs to the glycosyl hydrolase 32 family. Detected in leaves, with maximum levels at the leaf tip.

The enzyme catalyses Hydrolysis of terminal, non-reducing (2-&gt;1)-linked beta-D-fructofuranose residues in fructans.. Inhibited by sucrose. Functionally, hydrolyzes inulin-type beta-(2,1)-fructans. Has low activity against beta-(2,6)-linked fructans. May play a role as a beta-(2,1)-trimmer during graminan biosynthesis. The chain is Fructan 1-exohydrolase from Bromus pictus (Patagonian grass).